A 287-amino-acid chain; its full sequence is Hydroxysteroid 11-beta-dehydrogenase 1-like protein (287 aa).

Residues Met1–Ala15 form the signal peptide. NADP(+) is bound by residues Gly36–Thr62, Asp87–Met88, and Asn114–Leu116. Ser165 provides a ligand contact to substrate. The active-site Proton acceptor is Tyr178. NADP(+) is bound by residues Tyr178–Lys182 and Gly211–Ser217. Residue Asn280 is glycosylated (N-linked (GlcNAc...) asparagine).

It belongs to the short-chain dehydrogenases/reductases (SDR) family.

The protein resides in the secreted. The catalysed reaction is cortisone + NADPH + H(+) = cortisol + NADP(+). Its function is as follows. Unidirectional NADP(+)-dependent cortisol dehydrogenase (in vitro). This Bos taurus (Bovine) protein is Hydroxysteroid 11-beta-dehydrogenase 1-like protein (HSD11B1L).